Here is a 103-residue protein sequence, read N- to C-terminus: Growth-regulated alpha protein (103 aa).

The signal sequence occupies residues 1-30 (MARAANPAPRLLGAAMLLLLLVAAGRRAAG). Disulfide bonds link Cys39/Cys65 and Cys41/Cys81.

This sequence belongs to the intercrine alpha (chemokine CxC) family.

Its subcellular location is the secreted. In terms of biological role, has chemotactic activity for neutrophils. This Ovis aries (Sheep) protein is Growth-regulated alpha protein (CXCL1).